The sequence spans 42 residues: Potassium channel gamma toxin gamma-KTx 1.9 (42 aa).

Disulfide bonds link Cys-5/Cys-23, Cys-11/Cys-34, Cys-20/Cys-39, and Cys-24/Cys-41.

It belongs to the ergtoxin family. Gamma-KTx 1 subfamily. As to expression, expressed by the venom gland.

The protein localises to the secreted. Its function is as follows. Blocks human voltage-gated potassium channel Kv11.1/KCNH2/ERG1 (IC(50)=16.9 nM). This chain is Potassium channel gamma toxin gamma-KTx 1.9, found in Centruroides tecomanus (Scorpion).